A 121-amino-acid polypeptide reads, in one-letter code: Large ribosomal subunit protein bL19 (121 aa).

The protein belongs to the bacterial ribosomal protein bL19 family.

Functionally, this protein is located at the 30S-50S ribosomal subunit interface and may play a role in the structure and function of the aminoacyl-tRNA binding site. This Chlamydia pneumoniae (Chlamydophila pneumoniae) protein is Large ribosomal subunit protein bL19 (rplS).